The following is a 357-amino-acid chain: Quinolinate synthase (357 aa).

Residues histidine 50 and serine 71 each coordinate iminosuccinate. Cysteine 116 is a [4Fe-4S] cluster binding site. Iminosuccinate-binding positions include 142 to 144 (YAN) and serine 159. Position 203 (cysteine 203) interacts with [4Fe-4S] cluster. Iminosuccinate contacts are provided by residues 229 to 231 (HPE) and threonine 246. Cysteine 300 lines the [4Fe-4S] cluster pocket.

The protein belongs to the quinolinate synthase family. Type 1 subfamily. [4Fe-4S] cluster is required as a cofactor.

Its subcellular location is the cytoplasm. The enzyme catalyses iminosuccinate + dihydroxyacetone phosphate = quinolinate + phosphate + 2 H2O + H(+). It participates in cofactor biosynthesis; NAD(+) biosynthesis; quinolinate from iminoaspartate: step 1/1. Catalyzes the condensation of iminoaspartate with dihydroxyacetone phosphate to form quinolinate. The protein is Quinolinate synthase of Shewanella oneidensis (strain ATCC 700550 / JCM 31522 / CIP 106686 / LMG 19005 / NCIMB 14063 / MR-1).